The chain runs to 305 residues: tRNA dimethylallyltransferase (305 aa).

8-15 contacts ATP; the sequence is GPTASGKT. 10–15 serves as a coordination point for substrate; sequence TASGKT. Positions 33–36 are interaction with substrate tRNA; it reads DSQQ.

It belongs to the IPP transferase family. In terms of assembly, monomer. Requires Mg(2+) as cofactor.

The catalysed reaction is adenosine(37) in tRNA + dimethylallyl diphosphate = N(6)-dimethylallyladenosine(37) in tRNA + diphosphate. Catalyzes the transfer of a dimethylallyl group onto the adenine at position 37 in tRNAs that read codons beginning with uridine, leading to the formation of N6-(dimethylallyl)adenosine (i(6)A). This chain is tRNA dimethylallyltransferase, found in Anaeromyxobacter sp. (strain K).